Reading from the N-terminus, the 669-residue chain is Threonine--tRNA ligase (669 aa).

The TGS domain occupies 3–60 (DAQQITLLVDGEETKVTTGTTGAELFFERRDVVVARVNGELKDLDQELPEGAEVEGVT). Residues 260–566 (DHRKLGSELD…LTEHYAGAFP (307 aa)) are catalytic. Positions 365, 416, and 543 each coordinate Zn(2+).

The protein belongs to the class-II aminoacyl-tRNA synthetase family. In terms of assembly, homodimer. The cofactor is Zn(2+).

The protein localises to the cytoplasm. The catalysed reaction is tRNA(Thr) + L-threonine + ATP = L-threonyl-tRNA(Thr) + AMP + diphosphate + H(+). In terms of biological role, catalyzes the attachment of threonine to tRNA(Thr) in a two-step reaction: L-threonine is first activated by ATP to form Thr-AMP and then transferred to the acceptor end of tRNA(Thr). Also edits incorrectly charged L-seryl-tRNA(Thr). The sequence is that of Threonine--tRNA ligase from Pseudarthrobacter chlorophenolicus (strain ATCC 700700 / DSM 12829 / CIP 107037 / JCM 12360 / KCTC 9906 / NCIMB 13794 / A6) (Arthrobacter chlorophenolicus).